A 93-amino-acid polypeptide reads, in one-letter code: Neurophysin 1 (93 aa).

7 disulfide bridges follow: cysteine 10-cysteine 54, cysteine 13-cysteine 27, cysteine 21-cysteine 44, cysteine 28-cysteine 34, cysteine 61-cysteine 74, cysteine 68-cysteine 86, and cysteine 75-cysteine 80.

Belongs to the vasopressin/oxytocin family.

It is found in the secreted. Functionally, neurophysin 1 specifically binds oxytocin. The polypeptide is Neurophysin 1 (Anser anser anser (Western greylag goose)).